Consider the following 379-residue polypeptide: Protein hairy (379 aa).

Positions 20 to 50 (STQQQQQQQQHKEAPIKSDRRSNKPIMEKRR) are disordered. Residues 29-47 (QHKEAPIKSDRRSNKPIME) are compositionally biased toward basic and acidic residues. The interaction with Topors stretch occupies residues 36–55 (KSDRRSNKPIMEKRRRARIN). The bHLH domain occupies 38–95 (DRRSNKPIMEKRRRARINNCLNELKTLILDATKKDPARHSKLEKADILEKTVKHLQEL). In terms of domain architecture, Orange spans 114–143 (FKAGFADCANEVSRFPGLDSTQRRRLLQHL). Disordered stretches follow at residues 167–208 (QSLH…NTTA) and 298–345 (QRTA…VKPS). 2 stretches are compositionally biased toward low complexity: residues 182–207 (PEQEPSVTPVAASGNNNSSSNNTNTT) and 301–328 (ASTGSASSHSSAGYESAPSSSSSRGSYA). The short motif at 376–379 (WRPW) is the WRPW motif element.

In terms of assembly, transcription repression requires formation of a complex with a corepressor protein (Groucho).

The protein resides in the nucleus. In terms of biological role, pair-rule protein that regulates embryonic segmentation and adult bristle patterning. Transcriptional repressor of genes that require a bHLH protein for their transcription (e.g. ftz). This is Protein hairy from Drosophila virilis (Fruit fly).